An 87-amino-acid polypeptide reads, in one-letter code: MSKGHSLQDPYLNVLRKERIPVSIYLVNGIKLQGQVESFDQFVVLLKNTVSQMVYKHAISTVVPSRPVRVPMLNPESTGNDDMESGA.

The region spanning 9-68 (DPYLNVLRKERIPVSIYLVNGIKLQGQVESFDQFVVLLKNTVSQMVYKHAISTVVPSRPV) is the Sm domain.

This sequence belongs to the Hfq family. In terms of assembly, homohexamer.

RNA chaperone that binds small regulatory RNA (sRNAs) and mRNAs to facilitate mRNA translational regulation in response to envelope stress, environmental stress and changes in metabolite concentrations. Also binds with high specificity to tRNAs. The chain is RNA-binding protein Hfq from Teredinibacter turnerae (strain ATCC 39867 / T7901).